We begin with the raw amino-acid sequence, 486 residues long: Histone acetyltransferase type B catalytic subunit DDB_G0274269 (486 aa).

A coiled-coil region spans residues 27–69 (DIEELKNKDNKENKDKENKAHIKDEGEEEEQKEKKEEEEKEDD). Positions 33–50 (NKDNKENKDKENKAHIKD) are enriched in basic and acidic residues. The interval 33–78 (NKDNKENKDKENKAHIKDEGEEEEQKEKKEEEEKEDDGGPISFHPT) is disordered. The N-acetyltransferase domain occupies 189 to 386 (VVFRYHEKLQ…YRISIKKRLY (198 aa)). Residues 260 to 262 (YLI) and 267 to 273 (QRMGHGK) contribute to the acetyl-CoA site. The Proton donor/acceptor role is filled by Glu-299. Positions 392–481 (DSEQIEKIKQ…KNYHKTLSSL (90 aa)) form a coiled coil.

This sequence belongs to the HAT1 family.

The catalysed reaction is L-lysyl-[protein] + acetyl-CoA = N(6)-acetyl-L-lysyl-[protein] + CoA + H(+). In Dictyostelium discoideum (Social amoeba), this protein is Histone acetyltransferase type B catalytic subunit DDB_G0274269.